The following is a 252-amino-acid chain: U2 small nuclear ribonucleoprotein A' (252 aa).

LRR repeat units lie at residues 41 to 62 (PHDA…PLSP), 63 to 84 (RIRT…LPNA), and 87 to 108 (NLKN…EVLG). An LRRCT domain is found at 121 to 159 (NPVTKKENYRYWVLWLCPQVRFLDYVKVKDAERQKAKEL).

This sequence belongs to the U2 small nuclear ribonucleoprotein A family. In terms of assembly, associated with the spliceosome.

The protein resides in the nucleus. In terms of biological role, involved in pre-mRNA splicing. This chain is U2 small nuclear ribonucleoprotein A' (lea-1), found in Neurospora crassa (strain ATCC 24698 / 74-OR23-1A / CBS 708.71 / DSM 1257 / FGSC 987).